Consider the following 372-residue polypeptide: Ribosomal RNA small subunit methyltransferase H (372 aa).

Residues 78 to 80, aspartate 97, tyrosine 124, aspartate 148, and glutamine 155 each bind S-adenosyl-L-methionine; that span reads GGH.

Belongs to the methyltransferase superfamily. RsmH family.

It localises to the cytoplasm. The enzyme catalyses cytidine(1402) in 16S rRNA + S-adenosyl-L-methionine = N(4)-methylcytidine(1402) in 16S rRNA + S-adenosyl-L-homocysteine + H(+). Its function is as follows. Specifically methylates the N4 position of cytidine in position 1402 (C1402) of 16S rRNA. The sequence is that of Ribosomal RNA small subunit methyltransferase H from Mycobacterium leprae (strain Br4923).